We begin with the raw amino-acid sequence, 466 residues long: Putative multidrug resistance protein MdtD (466 aa).

14 helical membrane-spanning segments follow: residues 11-31, 48-68, 71-91, 105-125, 137-157, 164-184, 194-214, 218-238, 262-282, 292-312, 328-347, 351-370, 402-422, and 429-449; these read LWIV…VNTA, SVIV…GWLA, IGVK…SLLC, VIQG…VMKI, FVTL…GFLV, WIFL…WFLM, FDIS…LALD, SLGI…IALL, FSIG…LPFM, GFSP…SMGI, VLVA…ALVA, WIWM…AIRF, SLGV…HIAA, and TVFL…ALIF.

This sequence belongs to the major facilitator superfamily. TCR/Tet family.

The protein localises to the cell inner membrane. The chain is Putative multidrug resistance protein MdtD from Pectobacterium atrosepticum (strain SCRI 1043 / ATCC BAA-672) (Erwinia carotovora subsp. atroseptica).